The chain runs to 284 residues: Urease accessory protein UreD (284 aa).

A disordered region spans residues 1–28 (MQSEQQAIGASGCEDAQQPVRQQRARGR).

The protein belongs to the UreD family. In terms of assembly, ureD, UreF and UreG form a complex that acts as a GTP-hydrolysis-dependent molecular chaperone, activating the urease apoprotein by helping to assemble the nickel containing metallocenter of UreC. The UreE protein probably delivers the nickel.

The protein resides in the cytoplasm. In terms of biological role, required for maturation of urease via the functional incorporation of the urease nickel metallocenter. The protein is Urease accessory protein UreD of Agrobacterium fabrum (strain C58 / ATCC 33970) (Agrobacterium tumefaciens (strain C58)).